Reading from the N-terminus, the 189-residue chain is Cytidylate kinase (189 aa).

An ATP-binding site is contributed by 7–15; that stretch reads GPPGSGKTS.

Belongs to the cytidylate kinase family. Type 2 subfamily.

The protein localises to the cytoplasm. The enzyme catalyses CMP + ATP = CDP + ADP. It carries out the reaction dCMP + ATP = dCDP + ADP. The sequence is that of Cytidylate kinase from Saccharolobus islandicus (strain Y.N.15.51 / Yellowstone #2) (Sulfolobus islandicus).